Consider the following 292-residue polypeptide: Xanthine dehydrogenase FAD-binding subunit (292 aa).

The FAD-binding PCMH-type domain occupies 1-176 (MFDFASYHRA…VAFHFPPQPK (176 aa)). Residues 27 to 34 (KLLAGGTD), 109 to 113 (ATYGG), I165, and F184 contribute to the FAD site.

As to quaternary structure, heterotrimer of XdhA, XdhB and XdhC. It depends on FAD as a cofactor.

The catalysed reaction is xanthine + NAD(+) + H2O = urate + NADH + H(+). It catalyses the reaction hypoxanthine + NAD(+) + H2O = xanthine + NADH + H(+). It participates in purine metabolism; hypoxanthine degradation; urate from hypoxanthine: step 1/2. The protein operates within purine metabolism; hypoxanthine degradation; urate from hypoxanthine: step 2/2. In terms of biological role, presumed to be a dehydrogenase, but possibly an oxidase. Participates in limited purine salvage (requires aspartate) but does not support aerobic growth on purines as the sole carbon source (purine catabolism). In Escherichia coli O157:H7, this protein is Xanthine dehydrogenase FAD-binding subunit (xdhB).